Reading from the N-terminus, the 389-residue chain is Geranylgeranyl pyrophosphate synthase A (389 aa).

Residues lysine 99, arginine 102, and histidine 131 each coordinate isopentenyl diphosphate. Aspartate 138 and aspartate 142 together coordinate Mg(2+). Arginine 147 contributes to the dimethylallyl diphosphate binding site. Arginine 148 is a binding site for isopentenyl diphosphate.

It belongs to the FPP/GGPP synthase family. It depends on Mg(2+) as a cofactor.

It localises to the cytoplasm. It carries out the reaction isopentenyl diphosphate + (2E)-geranyl diphosphate = (2E,6E)-farnesyl diphosphate + diphosphate. The enzyme catalyses isopentenyl diphosphate + (2E,6E)-farnesyl diphosphate = (2E,6E,10E)-geranylgeranyl diphosphate + diphosphate. Its pathway is isoprenoid biosynthesis; farnesyl diphosphate biosynthesis; farnesyl diphosphate from geranyl diphosphate and isopentenyl diphosphate: step 1/1. The protein operates within isoprenoid biosynthesis; geranylgeranyl diphosphate biosynthesis; geranylgeranyl diphosphate from farnesyl diphosphate and isopentenyl diphosphate: step 1/1. Functionally, catalyzes the trans-addition of the 2 molecules of isopentenyl diphosphate (IPP) onto geranyl diphosphate (GDP) to form geranylgeranyl pyrophosphate (GGDP). Does not catalyze the conversion of dimethylallyl diphosphate (DMAPP). In Phomopsis amygdali (Fusicoccum amygdali), this protein is Geranylgeranyl pyrophosphate synthase A (GGS-A).